Here is a 521-residue protein sequence, read N- to C-terminus: Membrane-bound transcription factor site-2 protease (521 aa).

Residues Met1–Pro3 are Cytoplasmic-facing. A helical membrane pass occupies residues Val4–Leu24. Residues Lys25–Gln74 are Lumenal-facing. The next 2 helical transmembrane spans lie at Trp75–Gly95 and Lys96–Ala107. At Asp108–Gln146 the chain is on the lumenal side. The tract at residues Tyr113–Ser137 is disordered. The helical transmembrane segment at Val147 to Val171 threads the bilayer. His173 is a binding site for Zn(2+). The active site involves Glu174. 3 helical membrane passes run Gly176–Phe188, Asn189–Leu211, and Phe231–Tyr253. His177 is a Zn(2+) binding site. The Lumenal portion of the chain corresponds to Thr254–Lys448. N-linked (GlcNAc...) asparagine glycosylation occurs at Asn339. Helical transmembrane passes span Tyr449 to Phe466 and Ala467 to Leu478. Residues Asp479–Leu494 lie on the Lumenal side of the membrane. A helical transmembrane segment spans residues Ile495–Leu515. Residues Trp516–Arg521 are Cytoplasmic-facing.

Belongs to the peptidase M50A family. It depends on Zn(2+) as a cofactor.

It is found in the membrane. Its subcellular location is the cytoplasm. It localises to the golgi apparatus membrane. The enzyme catalyses Cleaves several transcription factors that are type-2 transmembrane proteins within membrane-spanning domains. Known substrates include sterol regulatory element-binding protein (SREBP) -1, SREBP-2 and forms of the transcriptional activator ATF6. SREBP-2 is cleaved at the site 477-DRSRILL-|-CVLTFLCLSFNPLTSLLQWGGA-505. The residues Asn-Pro, 11 residues distal to the site of cleavage in the membrane-spanning domain, are important for cleavage by S2P endopeptidase. Replacement of either of these residues does not prevent cleavage, but there is no cleavage if both of these residues are replaced.. In terms of biological role, zinc metalloprotease that mediates intramembrane proteolysis of proteins such as ATF6, ATF6B, SREBF1/SREBP1 and SREBF2/SREBP2. Catalyzes the second step in the proteolytic activation of the sterol regulatory element-binding proteins (SREBPs) SREBF1/SREBP1 and SREBF2/SREBP2: cleaves SREBPs within the first transmembrane segment, thereby releasing the N-terminal segment with a portion of the transmembrane segment attached. Mature N-terminal SREBP fragments shuttle to the nucleus and activate gene transcription. Also mediates the second step in the proteolytic activation of the cyclic AMP-dependent transcription factor ATF-6 (ATF6 and ATF6B). Involved in intramembrane proteolysis during bone formation. In astrocytes and osteoblasts, upon DNA damage and ER stress, mediates the second step of the regulated intramembrane proteolytic activation of the transcription factor CREB3L1, leading to the inhibition of cell-cycle progression. This Pongo abelii (Sumatran orangutan) protein is Membrane-bound transcription factor site-2 protease (MBTPS2).